Reading from the N-terminus, the 46-residue chain is Protein PsbN (46 aa).

A helical membrane pass occupies residues 10–30 (IAITILIVLLGLTAFGVYTAF).

Belongs to the PsbN family.

The protein localises to the cellular thylakoid membrane. In terms of biological role, may play a role in photosystem I and II biogenesis. The sequence is that of Protein PsbN from Prochlorococcus marinus (strain SARG / CCMP1375 / SS120).